The following is a 108-amino-acid chain: Abscisic stress-ripening protein 3 (108 aa).

2 disordered regions span residues 1–34 (MAEEKQHHRLFHHKNREEEGGPVDHKKKVKHHSH) and 84–108 (FAFHEHHQKKEAKKEKKAAEKGRHH). Residues 15 to 24 (NREEEGGPVD) are compositionally biased toward basic and acidic residues. A compositionally biased stretch (basic residues) spans 25-34 (HKKKVKHHSH). Over residues 95-108 (AKKEKKAAEKGRHH) the composition is skewed to basic and acidic residues.

It belongs to the abscisic acid and water stress-induced protein family.

This Solanum lycopersicum (Tomato) protein is Abscisic stress-ripening protein 3.